The chain runs to 149 residues: Large ribosomal subunit protein uL15 (149 aa).

Composition is skewed to basic residues over residues 1 to 13 and 21 to 42; these read MPTR…KHRG and RIGK…HHHR. The interval 1-44 is disordered; the sequence is MPTRLTKTRKHRGNVSAGKGRIGKHRKHPGGRGKAGGQHHHRTN.

This sequence belongs to the universal ribosomal protein uL15 family. In terms of assembly, component of the large ribosomal subunit. Mature ribosomes consist of a small (40S) and a large (60S) subunit. The 40S subunit contains about 32 different proteins and 1 molecule of RNA (18S). The 60S subunit contains 45 different proteins and 3 molecules of RNA (25S, 5.8S and 5S).

It localises to the cytoplasm. Component of the ribosome, a large ribonucleoprotein complex responsible for the synthesis of proteins in the cell. The small ribosomal subunit (SSU) binds messenger RNAs (mRNAs) and translates the encoded message by selecting cognate aminoacyl-transfer RNA (tRNA) molecules. The large subunit (LSU) contains the ribosomal catalytic site termed the peptidyl transferase center (PTC), which catalyzes the formation of peptide bonds, thereby polymerizing the amino acids delivered by tRNAs into a polypeptide chain. The nascent polypeptides leave the ribosome through a tunnel in the LSU and interact with protein factors that function in enzymatic processing, targeting, and the membrane insertion of nascent chains at the exit of the ribosomal tunnel. This Candida albicans (strain SC5314 / ATCC MYA-2876) (Yeast) protein is Large ribosomal subunit protein uL15.